A 164-amino-acid chain; its full sequence is Large ribosomal subunit protein uL11 (164 aa).

It belongs to the universal ribosomal protein uL11 family. Part of the ribosomal stalk of the 50S ribosomal subunit. Interacts with L10 and the large rRNA to form the base of the stalk. L10 forms an elongated spine to which L12 dimers bind in a sequential fashion forming a multimeric L10(L12)X complex.

Forms part of the ribosomal stalk which helps the ribosome interact with GTP-bound translation factors. The sequence is that of Large ribosomal subunit protein uL11 from Pyrococcus horikoshii (strain ATCC 700860 / DSM 12428 / JCM 9974 / NBRC 100139 / OT-3).